The following is a 513-amino-acid chain: Probable tubulin polyglutamylase ttll-15 (513 aa).

Positions 73–411 (VTGSYESAHT…STPITKEADI (339 aa)) constitute a TTL domain. ATP contacts are provided by residues 216–219 (QKFV), Lys229, and Asp231.

This sequence belongs to the tubulin--tyrosine ligase family. As to expression, expressed in hypodermis and pharyngeal muscles.

Its function is as follows. Probable polyglutamylase that forms polyglutamate side chains on tubulin. Probably acts when complexed with other proteins. Appears to be dispensable for polar spindle formation in dividing embryonic cells, for cilia-dependent osmotic avoidance and for male mating behavior. Regulates microtubule dynamics in uterine muscle cells. The chain is Probable tubulin polyglutamylase ttll-15 from Caenorhabditis elegans.